Here is a 743-residue protein sequence, read N- to C-terminus: MADPGLRSGVGLPSQQGQKHDLQKDQKQPHVNNADRTTQSLLNSYIYDYLIKKDYCEAARAFGREAQVQTLVRSQEETNSLAKRHKRMSPVAVKHEGISNNESSDENMNVNNGNLDSFSSSSAPPPPPILPIDSAGGFLIEWWNVFWDIYNARRGQGSEPAKAYMSHISNLRKKSRLNLQEIQKNSLHTGNTSHPYANASFPHDPANAMGQQIDSSQFHQGAGGLNDRNQHLMRQAMLNNQSRETFPPTAAQLQQLKQLHYRQLQSVQQQQKQHQQKKTPQSGSTPQMQNTTSQPTTHDTHPPKQQGPISDFRSIPSSPKTEGAPSNAQFRPSLPATPNGSVPQSNPLYDTTGLNGGQYPVVQNSAQPLLHEINFASNRNPHLKQGGAVPSSTLPQQQKSLDKPKPAQQPSTGQFSGNQMNQYGFSNSPYSQNMLYNFNGNANPSRLNPALKNYMEELKLLEQQNKKRLLLVSQEKERKGYTSASPDRPLSQTITESSVAKTKSTTPKSTDTPTEATTSPVKVSTKNSNTTENLNGINESNMPMLQNGLPLRTSGDHPSNYSNLIENSSTSDTNNADNGMDVMGNWQLQQTHSSRPTPNASSPLDVRSKQKPSSANSNAPTPAPTVNTTNPESSTNEATSVGPALEPSQGANVHKSDSELDNQNQSGKSNPDTSATPSAPTESTTVATKSSDNQLLDVGNSTDIDAALLNDFDFDKFLKDTSTGDDLWFGLFNLPDNEDSTAA.

Residues 1 to 36 (MADPGLRSGVGLPSQQGQKHDLQKDQKQPHVNNADR) are disordered. A compositionally biased stretch (basic and acidic residues) spans 18–28 (QKHDLQKDQKQ). A LisH domain is found at 38 to 70 (TQSLLNSYIYDYLIKKDYCEAARAFGREAQVQT). Disordered regions lie at residues 79–127 (NSLA…PPPP), 264–361 (LQSV…QYPV), 379–426 (RNPH…YGFS), and 476–692 (KERK…KSSD). Position 89 is a phosphoserine (Ser-89). Residues 98–114 (ISNNESSDENMNVNNGN) are compositionally biased toward polar residues. Residues 264 to 281 (LQSVQQQQKQHQQKKTPQ) are compositionally biased toward low complexity. Polar residues-rich tracts occupy residues 282-297 (SGST…QPTT), 315-353 (IPSS…DTTG), 390-399 (PSSTLPQQQK), 408-426 (QQPS…YGFS), and 482-500 (TSAS…SSVA). Over residues 501-520 (KTKSTTPKSTDTPTEATTSP) the composition is skewed to low complexity. Polar residues-rich tracts occupy residues 521-544 (VKVS…NMPM) and 556-566 (DHPSNYSNLIE). The segment covering 567-578 (NSSTSDTNNADN) has biased composition (low complexity). Residues 586–602 (WQLQQTHSSRPTPNASS) show a composition bias toward polar residues. Residues 612-631 (PSSANSNAPTPAPTVNTTNP) are compositionally biased toward low complexity. Polar residues predominate over residues 661-670 (DNQNQSGKSN). The span at 671 to 688 (PDTSATPSAPTESTTVAT) shows a compositional bias: low complexity.

The protein belongs to the FLO8 family.

It is found in the cytoplasm. The protein localises to the nucleus. Probable transcriptional regulator involved in cell adhesion. The polypeptide is Adhesion defective protein 2 (adn2) (Schizosaccharomyces pombe (strain 972 / ATCC 24843) (Fission yeast)).